The primary structure comprises 460 residues: Serine--tRNA ligase (460 aa).

The segment covering 50-65 has biased composition (basic and acidic residues); that stretch reads DRNEVSSKIGELKQAG. Disordered stretches follow at residues 50–71 and 109–129; these read DRNE…DAAQ and PDED…RREG. A compositionally biased stretch (acidic residues) spans 109–121; it reads PDEDAPVGDSEAE. L-serine is bound at residue 241 to 243; that stretch reads TAE. ATP contacts are provided by residues 272-274 and valine 288; that span reads RRE. Glutamate 295 lines the L-serine pocket. Residue 368 to 371 coordinates ATP; that stretch reads EVSS. Serine 404 is an L-serine binding site.

This sequence belongs to the class-II aminoacyl-tRNA synthetase family. Type-1 seryl-tRNA synthetase subfamily. In terms of assembly, homodimer. The tRNA molecule binds across the dimer.

It is found in the cytoplasm. The catalysed reaction is tRNA(Ser) + L-serine + ATP = L-seryl-tRNA(Ser) + AMP + diphosphate + H(+). The enzyme catalyses tRNA(Sec) + L-serine + ATP = L-seryl-tRNA(Sec) + AMP + diphosphate + H(+). It functions in the pathway aminoacyl-tRNA biosynthesis; selenocysteinyl-tRNA(Sec) biosynthesis; L-seryl-tRNA(Sec) from L-serine and tRNA(Sec): step 1/1. Catalyzes the attachment of serine to tRNA(Ser). Is also able to aminoacylate tRNA(Sec) with serine, to form the misacylated tRNA L-seryl-tRNA(Sec), which will be further converted into selenocysteinyl-tRNA(Sec). This Halobacterium salinarum (strain ATCC 29341 / DSM 671 / R1) protein is Serine--tRNA ligase.